The sequence spans 221 residues: tRNA (guanine-N(7)-)-methyltransferase (221 aa).

Positions 51, 76, 103, and 125 each coordinate S-adenosyl-L-methionine. Asp-125 is a catalytic residue. 2 residues coordinate substrate: Lys-129 and Asp-161.

This sequence belongs to the class I-like SAM-binding methyltransferase superfamily. TrmB family.

It carries out the reaction guanosine(46) in tRNA + S-adenosyl-L-methionine = N(7)-methylguanosine(46) in tRNA + S-adenosyl-L-homocysteine. It participates in tRNA modification; N(7)-methylguanine-tRNA biosynthesis. Functionally, catalyzes the formation of N(7)-methylguanine at position 46 (m7G46) in tRNA. In Wolbachia pipientis wMel, this protein is tRNA (guanine-N(7)-)-methyltransferase.